Reading from the N-terminus, the 79-residue chain is MKPIYARYPEVRMRWFDAEAFSARCSDVAMFETESVPAFYYLIDALRDSPLMTEPYFEFVDIIPAVEDGFRDYDAQLAQ.

The protein belongs to the darcynin family.

This chain is Darcynin, found in Chromobacterium violaceum (strain ATCC 12472 / DSM 30191 / JCM 1249 / CCUG 213 / NBRC 12614 / NCIMB 9131 / NCTC 9757 / MK).